The chain runs to 88 residues: Cell division topological specificity factor (88 aa).

It belongs to the MinE family.

Its function is as follows. Prevents the cell division inhibition by proteins MinC and MinD at internal division sites while permitting inhibition at polar sites. This ensures cell division at the proper site by restricting the formation of a division septum at the midpoint of the long axis of the cell. This Aeromonas hydrophila subsp. hydrophila (strain ATCC 7966 / DSM 30187 / BCRC 13018 / CCUG 14551 / JCM 1027 / KCTC 2358 / NCIMB 9240 / NCTC 8049) protein is Cell division topological specificity factor.